A 443-amino-acid chain; its full sequence is Differentially expressed in FDCP 8 homolog B (443 aa).

Residues 14–49 (HLNPFDKKGGAERHPADSETQPCKDSSTSSPLSVPE) are disordered. Residues 17–30 (PFDKKGGAERHPAD) show a composition bias toward basic and acidic residues. Residues 31-45 (SETQPCKDSSTSSPL) are compositionally biased toward polar residues. Phorbol-ester/DAG-type zinc fingers lie at residues 134–185 (EHRF…TKPC) and 364–424 (IHTT…STSC).

Belongs to the DEF8 family.

Functionally, positively regulates lysosome peripheral distribution and ruffled border formation in osteoclasts. Involved in bone resorption. This Xenopus laevis (African clawed frog) protein is Differentially expressed in FDCP 8 homolog B (def8-b).